The primary structure comprises 398 residues: Galactose-3-O-sulfotransferase 2 (398 aa).

Over 1–11 (MLSALGGLQRC) the chain is Cytoplasmic. A helical; Signal-anchor for type II membrane protein membrane pass occupies residues 12 to 29 (FWAILLLALTVSLLAGFL). At 30-398 (HKDVRLLMPL…PPKNIPFLGA (369 aa)) the chain is on the lumenal side. N-linked (GlcNAc...) asparagine glycans are attached at residues asparagine 77, asparagine 133, asparagine 180, asparagine 288, asparagine 330, and asparagine 360.

This sequence belongs to the galactose-3-O-sulfotransferase family.

It localises to the golgi apparatus. The protein resides in the golgi stack membrane. Its pathway is protein modification; carbohydrate sulfation. Its activity is regulated as follows. Strongly inhibited by Cu(2+) and Zn(2+). In terms of biological role, transfers a sulfate group to the hydroxyl group at C3 of non-reducing beta-galactosyl residues. Acts both on type 1 (Gal-beta-1,3-GlcNAc) and type 2 (Gal-beta-1,4-GlcNAc) chains with similar efficiency. The protein is Galactose-3-O-sulfotransferase 2 (GAL3ST2) of Sus scrofa (Pig).